An 80-amino-acid polypeptide reads, in one-letter code: MARKKTLDFEQSLTELQTLVERLESGELSLEESLGAFEQGIRLTRECQASLSQAEQKVQILLERDGELSEAPFDTEGDEA.

Belongs to the XseB family. In terms of assembly, heterooligomer composed of large and small subunits.

The protein resides in the cytoplasm. It catalyses the reaction Exonucleolytic cleavage in either 5'- to 3'- or 3'- to 5'-direction to yield nucleoside 5'-phosphates.. Functionally, bidirectionally degrades single-stranded DNA into large acid-insoluble oligonucleotides, which are then degraded further into small acid-soluble oligonucleotides. In Pseudomonas paraeruginosa (strain DSM 24068 / PA7) (Pseudomonas aeruginosa (strain PA7)), this protein is Exodeoxyribonuclease 7 small subunit.